The following is a 338-amino-acid chain: UDP-glucose 4-epimerase (338 aa).

NAD(+)-binding positions include 11-12 (YI), 31-36 (DNLCNS), 58-59 (DI), 80-84 (FAGLK), Asn-99, Ser-124, Tyr-149, Lys-153, and Phe-178. Residues Ser-124 and Tyr-149 each coordinate substrate. Catalysis depends on Tyr-149, which acts as the Proton acceptor. Substrate contacts are provided by residues Asn-179, 199–200 (NL), 216–218 (AVF), Arg-231, 292–295 (RDGD), and Tyr-299.

The protein belongs to the NAD(P)-dependent epimerase/dehydratase family. Homodimer. Requires NAD(+) as cofactor.

It catalyses the reaction UDP-alpha-D-glucose = UDP-alpha-D-galactose. The protein operates within carbohydrate metabolism; galactose metabolism. Its function is as follows. Involved in the metabolism of galactose. Catalyzes the conversion of UDP-galactose (UDP-Gal) to UDP-glucose (UDP-Glc) through a mechanism involving the transient reduction of NAD. The protein is UDP-glucose 4-epimerase (galE) of Salmonella typhimurium (strain LT2 / SGSC1412 / ATCC 700720).